The sequence spans 555 residues: Probable portal protein (555 aa).

Belongs to the podoviridae head-to-tail connector protein family. Homododecamer.

Its subcellular location is the virion. Its function is as follows. Forms the portal vertex of the capsid. This portal plays critical roles in head assembly, genome packaging, neck/tail attachment, and genome ejection. The portal protein multimerizes as a single ring-shaped homododecamer arranged around a central channel. The chain is Probable portal protein from Bordetella bronchiseptica (Alcaligenes bronchisepticus).